We begin with the raw amino-acid sequence, 362 residues long: Vignain (362 aa).

The N-terminal stretch at 1 to 20 (MAMKKLLWVVLSLSLVLGVA) is a signal peptide. Positions 21–126 (NSFDFHEKDL…SGTFMYEKVG (106 aa)) are cleaved as a propeptide — activation peptide. 3 cysteine pairs are disulfide-bonded: Cys-149–Cys-191, Cys-183–Cys-224, and Cys-282–Cys-334. Cys-152 is a catalytic residue. Catalysis depends on residues His-288 and Asn-309. N-linked (GlcNAc...) asparagine glycosylation is found at Asn-326 and Asn-346. Positions 353–362 (GSLSSPKDEL) are cleaved as a propeptide — removed in mature form. A Prevents secretion from ER motif is present at residues 359–362 (KDEL).

This sequence belongs to the peptidase C1 family. In terms of processing, the mature protein is not glycosylated. Post-translationally, the precursor stored in the endoplasmic reticulum lumen is processed during the transport to proteins bodies to two dominant mature forms that differ by a single amino acid residue at the N-terminus.

Its subcellular location is the endoplasmic reticulum lumen. The protein resides in the vacuole. It is found in the aleurone grain. Thought to be involved in the hydrolysis of stored seed proteins. In vitro, catalyzes the hydrolysis of proteins, such as azocasein. Shows a preferential cleavage for Asn-|-Xaa in small molecule substrates such as Boc-Asn-|-OPHNO(2). The sequence is that of Vignain from Vigna mungo (Black gram).